The sequence spans 126 residues: Large-conductance mechanosensitive channel (126 aa).

A run of 2 helical transmembrane segments spans residues 14–34 (VIDLAVGVVIGTAFSAVVNSL) and 66–86 (FITTIVNFLIISAALYFLVVV).

This sequence belongs to the MscL family. Homopentamer.

The protein localises to the cell membrane. Channel that opens in response to stretch forces in the membrane lipid bilayer. May participate in the regulation of osmotic pressure changes within the cell. The chain is Large-conductance mechanosensitive channel from Roseiflexus sp. (strain RS-1).